Here is an 889-residue protein sequence, read N- to C-terminus: Cytoplasmic aconitate hydratase (889 aa).

Substrate-binding positions include Q86 and 205 to 207; that span reads DSH. [4Fe-4S] cluster contacts are provided by C437, C503, and C506. Substrate-binding positions include R536, R541, R699, and 779–780; that span reads SR.

The protein belongs to the aconitase/IPM isomerase family. As to quaternary structure, interacts (when associated with the 4Fe-4S) with FBXL5. Interacts with frataxin(81-210). The cofactor is [4Fe-4S] cluster.

It localises to the cytoplasm. The protein localises to the cytosol. The catalysed reaction is citrate = D-threo-isocitrate. Its function is as follows. Bifunctional iron sensor that switches between 2 activities depending on iron availability. Iron deprivation, promotes its mRNA binding activity through which it regulates the expression of genes involved in iron uptake, sequestration and utilization. Binds to iron-responsive elements (IRES) in the untranslated region of target mRNAs preventing for instance the translation of ferritin and aminolevulinic acid synthase and stabilizing the transferrin receptor mRNA. Conversely, when cellular iron levels are high, binds a 4Fe-4S cluster which precludes RNA binding activity and promotes the aconitase activity, the isomerization of citrate to isocitrate via cis-aconitate. The sequence is that of Cytoplasmic aconitate hydratase (ACO1) from Oryctolagus cuniculus (Rabbit).